Here is a 575-residue protein sequence, read N- to C-terminus: UvrABC system protein C (575 aa).

Residues 15-90 enclose the GIY-YIG domain; it reads AEPGVYQFEA…IKRHQPRYNV (76 aa). The UVR domain occupies 198–233; sequence GVLAEPLRREMETAAASQAFERAASLRDRLEAVETF.

This sequence belongs to the UvrC family. In terms of assembly, interacts with UvrB in an incision complex.

The protein resides in the cytoplasm. Functionally, the UvrABC repair system catalyzes the recognition and processing of DNA lesions. UvrC both incises the 5' and 3' sides of the lesion. The N-terminal half is responsible for the 3' incision and the C-terminal half is responsible for the 5' incision. This is UvrABC system protein C from Natronomonas pharaonis (strain ATCC 35678 / DSM 2160 / CIP 103997 / JCM 8858 / NBRC 14720 / NCIMB 2260 / Gabara) (Halobacterium pharaonis).